Reading from the N-terminus, the 284-residue chain is Shikimate dehydrogenase (NADP(+)) (284 aa).

Shikimate-binding positions include 20–22 (SIS) and Ser67. The active-site Proton acceptor is the Lys71. Asp83 is a binding site for NADP(+). Asn92 and Asp107 together coordinate shikimate. NADP(+)-binding positions include 129 to 133 (GAGGA) and Ile227. Tyr229 lines the shikimate pocket. Residue Gly250 participates in NADP(+) binding.

The protein belongs to the shikimate dehydrogenase family. Homodimer.

It catalyses the reaction shikimate + NADP(+) = 3-dehydroshikimate + NADPH + H(+). Its pathway is metabolic intermediate biosynthesis; chorismate biosynthesis; chorismate from D-erythrose 4-phosphate and phosphoenolpyruvate: step 4/7. Functionally, involved in the biosynthesis of the chorismate, which leads to the biosynthesis of aromatic amino acids. Catalyzes the reversible NADPH linked reduction of 3-dehydroshikimate (DHSA) to yield shikimate (SA). The polypeptide is Shikimate dehydrogenase (NADP(+)) (Streptococcus pneumoniae (strain ATCC 700669 / Spain 23F-1)).